The following is a 323-amino-acid chain: Cyclin-H (323 aa).

Serine 5 is subject to Phosphoserine; by CDK8. Residue serine 132 is modified to Phosphoserine. The disordered stretch occupies residues 296 to 323 (GYEDDDYVSKKPKQEEEEWTDDDLVDAL). Serine 304 is subject to Phosphoserine; by CDK8. Acidic residues predominate over residues 310–323 (EEEEWTDDDLVDAL). Threonine 315 carries the post-translational modification Phosphothreonine.

Belongs to the cyclin family. Cyclin C subfamily. Associates primarily with CDK7 and MAT1 to form the CAK complex. CAK can further associate with the core-TFIIH to form the TFIIH basal transcription factor.

It is found in the nucleus. Functionally, regulates CDK7, the catalytic subunit of the CDK-activating kinase (CAK) enzymatic complex. CAK activates the cyclin-associated kinases CDK1, CDK2, CDK4 and CDK6 by threonine phosphorylation. CAK complexed to the core-TFIIH basal transcription factor activates RNA polymerase II by serine phosphorylation of the repetitive C-terminal domain (CTD) of its large subunit (POLR2A), allowing its escape from the promoter and elongation of the transcripts. Involved in cell cycle control and in RNA transcription by RNA polymerase II. Its expression and activity are constant throughout the cell cycle. The protein is Cyclin-H (Ccnh) of Rattus norvegicus (Rat).